Here is a 396-residue protein sequence, read N- to C-terminus: Ribosomal RNA large subunit methyltransferase I (396 aa).

A PUA domain is found at 2 to 79 (AVRIKLKPGR…REEEIDREFF (78 aa)).

This sequence belongs to the methyltransferase superfamily. RlmI family.

Its subcellular location is the cytoplasm. It carries out the reaction cytidine(1962) in 23S rRNA + S-adenosyl-L-methionine = 5-methylcytidine(1962) in 23S rRNA + S-adenosyl-L-homocysteine + H(+). Specifically methylates the cytosine at position 1962 (m5C1962) of 23S rRNA. The chain is Ribosomal RNA large subunit methyltransferase I from Shewanella sp. (strain MR-7).